The chain runs to 360 residues: Phospho-N-acetylmuramoyl-pentapeptide-transferase (360 aa).

10 helical membrane passes run 21–41 (YVTF…LWWG), 74–94 (MGGI…GDLA), 97–117 (YVWV…IDDY), 135–155 (ILQS…ADLV), 168–188 (IMPQ…VGSS), 199–219 (GLAI…AYLS), 236–256 (AGEL…FLWF), 263–283 (VFMG…IAVL), 288–308 (ILLV…ILQV), and 338–358 (VIVR…ATLK).

Belongs to the glycosyltransferase 4 family. MraY subfamily. The cofactor is Mg(2+).

Its subcellular location is the cell inner membrane. The enzyme catalyses UDP-N-acetyl-alpha-D-muramoyl-L-alanyl-gamma-D-glutamyl-meso-2,6-diaminopimeloyl-D-alanyl-D-alanine + di-trans,octa-cis-undecaprenyl phosphate = di-trans,octa-cis-undecaprenyl diphospho-N-acetyl-alpha-D-muramoyl-L-alanyl-D-glutamyl-meso-2,6-diaminopimeloyl-D-alanyl-D-alanine + UMP. The protein operates within cell wall biogenesis; peptidoglycan biosynthesis. In terms of biological role, catalyzes the initial step of the lipid cycle reactions in the biosynthesis of the cell wall peptidoglycan: transfers peptidoglycan precursor phospho-MurNAc-pentapeptide from UDP-MurNAc-pentapeptide onto the lipid carrier undecaprenyl phosphate, yielding undecaprenyl-pyrophosphoryl-MurNAc-pentapeptide, known as lipid I. This Shewanella sediminis (strain HAW-EB3) protein is Phospho-N-acetylmuramoyl-pentapeptide-transferase.